We begin with the raw amino-acid sequence, 203 residues long: HTH-type transcriptional regulator CymR (203 aa).

Positions 13–73 (METQGKLIAA…ATFEWLYEQI (61 aa)) constitute an HTH tetR-type domain. The segment at residues 36 to 55 (RIADVPGAAGVSRGAQSHHF) is a DNA-binding region (H-T-H motif).

In terms of biological role, involved in the repression of the cym and cmt operons which are responsible of the p-cymene degradation. In Pseudomonas putida (Arthrobacter siderocapsulatus), this protein is HTH-type transcriptional regulator CymR.